A 407-amino-acid polypeptide reads, in one-letter code: Putative D-cysteine desulfhydrase 2, mitochondrial (407 aa).

Residues 1–34 (MRPSPALAGGGRTVANLLSATEWMLPSPATQVHT) constitute a mitochondrion transit peptide. Residues 39–72 (PSHSPPSPPHHFAFSNLTTAPKRNGGKGEEEGRP) form a disordered region. Lys-90 bears the N6-(pyridoxal phosphate)lysine mark.

Belongs to the ACC deaminase/D-cysteine desulfhydrase family. Pyridoxal 5'-phosphate is required as a cofactor.

Its subcellular location is the mitochondrion. The enzyme catalyses D-cysteine + H2O = hydrogen sulfide + pyruvate + NH4(+) + H(+). Its function is as follows. Catalyzes the production of hydrogen sulfide (H2S) from cysteine. This Oryza sativa subsp. japonica (Rice) protein is Putative D-cysteine desulfhydrase 2, mitochondrial.